Consider the following 305-residue polypeptide: tRNA dimethylallyltransferase (305 aa).

11–18 contacts ATP; the sequence is GPTAVGKT. 13–18 lines the substrate pocket; the sequence is TAVGKT. The interval 36–39 is interaction with substrate tRNA; the sequence is DSMQ.

Belongs to the IPP transferase family. In terms of assembly, monomer. Requires Mg(2+) as cofactor.

It catalyses the reaction adenosine(37) in tRNA + dimethylallyl diphosphate = N(6)-dimethylallyladenosine(37) in tRNA + diphosphate. In terms of biological role, catalyzes the transfer of a dimethylallyl group onto the adenine at position 37 in tRNAs that read codons beginning with uridine, leading to the formation of N6-(dimethylallyl)adenosine (i(6)A). This chain is tRNA dimethylallyltransferase, found in Listeria monocytogenes serotype 4b (strain CLIP80459).